We begin with the raw amino-acid sequence, 208 residues long: N-(5'-phosphoribosyl)anthranilate isomerase (208 aa).

It belongs to the TrpF family.

It catalyses the reaction N-(5-phospho-beta-D-ribosyl)anthranilate = 1-(2-carboxyphenylamino)-1-deoxy-D-ribulose 5-phosphate. The protein operates within amino-acid biosynthesis; L-tryptophan biosynthesis; L-tryptophan from chorismate: step 3/5. In Neisseria gonorrhoeae (strain NCCP11945), this protein is N-(5'-phosphoribosyl)anthranilate isomerase.